A 74-amino-acid polypeptide reads, in one-letter code: Small ribosomal subunit protein eS17 (74 aa).

It belongs to the eukaryotic ribosomal protein eS17 family.

The polypeptide is Small ribosomal subunit protein eS17 (Ignicoccus hospitalis (strain KIN4/I / DSM 18386 / JCM 14125)).